We begin with the raw amino-acid sequence, 168 residues long: Pleiotrophin (168 aa).

A signal peptide spans 1-32 (MQTPQYLQQRRKFAAAFLAFIFILAAVDTAEA). Intrachain disulfides connect cysteine 47-cysteine 76, cysteine 55-cysteine 85, cysteine 62-cysteine 89, cysteine 99-cysteine 131, and cysteine 109-cysteine 141. Chondroitin sulfate binding regions lie at residues 92 to 99 (KKQFGAEC) and 123 to 131 (KRALHNADC). The tract at residues 141 to 168 (CGKLTKSKPQAESKKKKKEGKKQEKMLD) is disordered. Residues 147 to 168 (SKPQAESKKKKKEGKKQEKMLD) are chondroitin sulfate A binding.

As to quaternary structure, interacts with ALK and NEK6. Interacts with PTPRZ1 (via chondroitin sulfate groups); promotes formation of homooligomers; oligomerization impairs tyrosine phosphatase activity. Forms a complex with PTPRZ1 and CTNNB1; this complex inactivates PTPRZ1 protein tyrosine phosphatase activity through PTN interaction and stimulates tyrosine phosphorylation of CTNNB1. Interacts with ITGB3 and ITGA5. Forms a complex with PTPRZ1 and integrin alpha-V/beta-3 (ITGAV:ITGB3) that stimulates endothelial cell migration through ITGB3 'Tyr-773' phosphorylation. Interacts with SDC3 (via heparan sulfate chains); this interaction mediates the neurite outgrowth-promoting signal from PTN to the cytoskeleton of growing neurites; this interaction mediates osteoblast recruitment. Interacts with GPC2 (via heparan sulfate); this interaction promotes neurite outgrowth through binding of PTN with chondroitin sulfate of proteoglycans, thereby releasing PTPRS of chondroitin sulfate proteoglycans (CSPGs) and leading to binding with heparan sulfate of GPC2. Post-translationally, phosphorylated by NEK6.

The protein resides in the secreted. In terms of biological role, secreted growth factor that mediates its signal through cell-surface proteoglycan and non-proteoglycan receptors. Binds cell-surface proteoglycan receptor via their chondroitin sulfate (CS) groups. Thereby regulates many processes like cell proliferation, cell survival, cell growth, cell differentiation and cell migration in several tissues namely neuron and bone. Also plays a role in synaptic plasticity and learning-related behavior by inhibiting long-term synaptic potentiation. Binds PTPRZ1, leading to neutralization of the negative charges of the CS chains of PTPRZ1, inducing PTPRZ1 clustering, thereby causing the dimerization and inactivation of its phosphatase activity leading to increased tyrosine phosphorylation of each of the PTPRZ1 substrates like ALK, CTNNB1 or AFAP1L2 in order to activate the PI3K-AKT pathway. Through PTPRZ1 binding controls oligodendrocyte precursor cell differentiation by enhancing the phosphorylation of AFAP1L2 in order to activate the PI3K-AKT pathway. Forms a complex with PTPRZ1 and integrin alpha-V/beta-3 (ITGAV:ITGB3) that stimulates endothelial cell migration through SRC dephosphorylation and activation that consequently leads to ITGB3 'Tyr-773' phosphorylation. In adult hippocampus promotes dendritic arborization, spine development, and functional integration and connectivity of newborn granule neurons through ALK by activating AKT signaling pathway. Binds GPC2 and chondroitin sulfate proteoglycans (CSPGs) at the neuron surface, leading to abrogation of binding between PTPRS and CSPGs and neurite outgrowth promotion. Binds SDC3 and mediates bone formation by recruiting and attaching osteoblasts/osteoblast precursors to the sites for new bone deposition. Binds ALK and promotes cell survival and cell proliferation through MAPK pathway activation. Inhibits proliferation and enhances differentiation of neural stem cells by inhibiting FGF2-induced fibroblast growth factor receptor signaling pathway. Mediates regulatory mechanisms in normal hemostasis and in hematopoietic regeneration and in maintaining the balance of myeloid and lymphoid regeneration. In addition may play a role in the female reproductive system, auditory response and the progesterone-induced decidualization pathway. This chain is Pleiotrophin, found in Bos taurus (Bovine).